The chain runs to 224 residues: Homeobox protein Hox-B6 (224 aa).

Positions 127–132 match the Antp-type hexapeptide motif; the sequence is VYPWMQ. Residues 146–205 constitute a DNA-binding region (homeobox); sequence GRRGRQTYTRYQTLELEKEFHYNRYLTRRRRIEIAHALCLTERQIKIWFQNRRMKWKKES. Ser214 bears the Phosphoserine mark.

Belongs to the Antp homeobox family.

It is found in the nucleus. Its function is as follows. Sequence-specific transcription factor which is part of a developmental regulatory system that provides cells with specific positional identities on the anterior-posterior axis. This is Homeobox protein Hox-B6 (Hoxb6) from Mus musculus (Mouse).